Reading from the N-terminus, the 463-residue chain is Digalactosyldiacylglycerol synthase 2, chloroplastic (463 aa).

The first 22 residues, 1–22, serve as a signal peptide directing secretion; the sequence is MGKKQHIAIFTTASLPWLTGTA.

The protein belongs to the glycosyltransferase group 1 family. Glycosyltransferase 4 subfamily. As to expression, high expression in nodules infected cells, and low in nodule and root vascular tissue.

The protein localises to the plastid. It localises to the chloroplast outer membrane. The protein resides in the plastid outer membrane. It carries out the reaction a 1,2-diacyl-3-O-(beta-D-galactosyl)-sn-glycerol + UDP-alpha-D-galactose = a 1,2-diacyl-3-O-[alpha-D-galactosyl-(1-&gt;6)-beta-D-galactosyl]-sn-glycerol + UDP + H(+). Involved in the synthesis of diacylglycerol galactolipids that are specifically found in thylakoid and in nodule peribacteroid membranes. Specific for alpha-glycosidic linkages. The protein is Digalactosyldiacylglycerol synthase 2, chloroplastic of Lotus japonicus (Lotus corniculatus var. japonicus).